We begin with the raw amino-acid sequence, 194 residues long: NADH-quinone oxidoreductase subunit B (194 aa).

Positions 1–11 are enriched in pro residues; that stretch reads MGVIATPPPSV. A disordered region spans residues 1 to 24; that stretch reads MGVIATPPPSVQGPSSQVPSSAPI. Residues 12–21 show a composition bias toward low complexity; that stretch reads QGPSSQVPSS. [4Fe-4S] cluster contacts are provided by C72, C73, C137, and C167.

The protein belongs to the complex I 20 kDa subunit family. As to quaternary structure, NDH-1 is composed of 14 different subunits. Subunits NuoB, C, D, E, F, and G constitute the peripheral sector of the complex. Requires [4Fe-4S] cluster as cofactor.

It localises to the cell inner membrane. It carries out the reaction a quinone + NADH + 5 H(+)(in) = a quinol + NAD(+) + 4 H(+)(out). In terms of biological role, NDH-1 shuttles electrons from NADH, via FMN and iron-sulfur (Fe-S) centers, to quinones in the respiratory chain. The immediate electron acceptor for the enzyme in this species is believed to be ubiquinone. Couples the redox reaction to proton translocation (for every two electrons transferred, four hydrogen ions are translocated across the cytoplasmic membrane), and thus conserves the redox energy in a proton gradient. In Rhodospirillum centenum (strain ATCC 51521 / SW), this protein is NADH-quinone oxidoreductase subunit B.